The chain runs to 1379 residues: MNYSTALPDFIEMQRVSFCWFIAQGLNDELTMFSRIHDFSYNTEYRLFGQEYSLVKPVYTIVRAKKLAANYSVQLVIPLEVRNKKLNSVRYFGQFTIINLPLMTTTATFVINGCERVIVSQIIRSPGIYFEKNKNHRKRKQFKSQVLGHASKLGSFLPSGVPWIIPYDQPWKPWIIGKKLGYSKYNSNKDTKLDFYFYSLKSFKIYQKISKITNSPIKVQRIKLFLQWLKLNQKEFNFKNKLNLSELSFLLNYWNFIFKFIIKYQFLYKKNFEESYQIQESEFKTIFKTWNNQPQLNDSFSLKKIDQLTSNYEKKIQFYHNVIQQQFFDNLMLVPFITKEKKILNLESLANRQKQKKISLTLLTNESIKFAFYFSPSLKEVFKYRSPKKRKPKEAKIKQPILYLRSPSKIVQFKDDHQVLDSYKKKYDTKDFYTATLIPESGSWIRFGFQKNTKINRYQYPIRHQEDEVIIQIDKITQKPILYLLKEMGLTDWEICSNLKHADFFYFTKPFLTGSLTSKQPLPRFDLHSDYYKNISEFSHIFDARYYRLGKIGRFQINNRLNLKLNNRIYTITYEDIFAILDCLVTLSISKTTGDDIDHLKNRRVRSVGELLQNLFRVGFQRLVRKLGSQINKRESGQISSFNIIGATVREFFGSSQLSQYMDQTNPLSSLTHRRRISGLGPGGLDRDRISFAVRDIHPSHYGRICPIETPEGPNVGLIASLTTCARVNKLGFIETPFWRVINGKVIKTGNPIYLTADIEDFYKIAPADISTNSKNYLTQNLIPVRYKQDFITVSPFQVDFISISPIQVVSVATSLIPFFEHDDANRALMGSNMQRQSVPLMLSQKPIVGTGLENQIAIDSGMTINAQGAGIVHSVTADYIIVKEYSGRKLKYILQKYQRSNQETCINHRPIVWKGEKIKSGQILTDGPGITNNELALGQNVLVAYMPWQGYNFEDAILINERLVYEDVFTSIHIERYDIEIEQDDDVSEQITKNIPNLSFSEIQNLNDDGIVALGTFVKPGDILVGKIIAKNDSEQLPEAKLLRAIFGAKAKGVRDTSFRMPKGKYGRVVDRVTFNRKTKLAYKFEKIQVFIAQIRKIKVGDKIAGRHGNKGIISRILPRQDMPFLPDGTPVDIILNPLGVPSRMNVGQLYECLLGIAGHKLNRRFKILPFDEMYGPEVSRILINKKLRQASIENDEAWLFNPYSPGKMVLIDGRTGKEFENPITVGNAYMLKLIHLVDDKMHARATGPYSLITQQPLGGKAQHGGQRFGEMEVWALEGFGAAFTLKELLTIKSDDMQGRNETLNAIVKGQLIPKSGVPESFKVLLQELRSIGLDMSTYKIENYNLNQHYELEVDLIETYDSLEKTFPPTSNLDDISF.

This sequence belongs to the RNA polymerase beta chain family. In plastids the minimal PEP RNA polymerase catalytic core is composed of four subunits: alpha, beta, beta', and beta''. When a (nuclear-encoded) sigma factor is associated with the core the holoenzyme is formed, which can initiate transcription.

It is found in the plastid. The protein resides in the chloroplast. The catalysed reaction is RNA(n) + a ribonucleoside 5'-triphosphate = RNA(n+1) + diphosphate. Functionally, DNA-dependent RNA polymerase catalyzes the transcription of DNA into RNA using the four ribonucleoside triphosphates as substrates. The chain is DNA-directed RNA polymerase subunit beta from Trieres chinensis (Marine centric diatom).